The chain runs to 267 residues: Tryptophan synthase alpha chain (267 aa).

Active-site proton acceptor residues include glutamate 49 and aspartate 60.

It belongs to the TrpA family. Tetramer of two alpha and two beta chains.

The enzyme catalyses (1S,2R)-1-C-(indol-3-yl)glycerol 3-phosphate + L-serine = D-glyceraldehyde 3-phosphate + L-tryptophan + H2O. It functions in the pathway amino-acid biosynthesis; L-tryptophan biosynthesis; L-tryptophan from chorismate: step 5/5. The alpha subunit is responsible for the aldol cleavage of indoleglycerol phosphate to indole and glyceraldehyde 3-phosphate. In Methylococcus capsulatus (strain ATCC 33009 / NCIMB 11132 / Bath), this protein is Tryptophan synthase alpha chain.